A 115-amino-acid polypeptide reads, in one-letter code: Large ribosomal subunit protein uL22 (115 aa).

It belongs to the universal ribosomal protein uL22 family. As to quaternary structure, part of the 50S ribosomal subunit.

Functionally, this protein binds specifically to 23S rRNA; its binding is stimulated by other ribosomal proteins, e.g. L4, L17, and L20. It is important during the early stages of 50S assembly. It makes multiple contacts with different domains of the 23S rRNA in the assembled 50S subunit and ribosome. In terms of biological role, the globular domain of the protein is located near the polypeptide exit tunnel on the outside of the subunit, while an extended beta-hairpin is found that lines the wall of the exit tunnel in the center of the 70S ribosome. The chain is Large ribosomal subunit protein uL22 from Coxiella burnetii (strain CbuG_Q212) (Coxiella burnetii (strain Q212)).